We begin with the raw amino-acid sequence, 257 residues long: Phosphonates import ATP-binding protein PhnC (257 aa).

One can recognise an ABC transporter domain in the interval 4 to 248; sequence IEFKDVNKVY…VFNDIYGRKL (245 aa). ATP is bound at residue 37–44; that stretch reads GLSGAGKS.

Belongs to the ABC transporter superfamily. Phosphonates importer (TC 3.A.1.9.1) family. In terms of assembly, the complex is composed of two ATP-binding proteins (PhnC), two transmembrane proteins (PhnE) and a solute-binding protein (PhnD).

It is found in the cell membrane. It carries out the reaction phosphonate(out) + ATP + H2O = phosphonate(in) + ADP + phosphate + H(+). Part of the ABC transporter complex PhnCDE involved in phosphonates import. Responsible for energy coupling to the transport system. The polypeptide is Phosphonates import ATP-binding protein PhnC (Staphylococcus haemolyticus (strain JCSC1435)).